We begin with the raw amino-acid sequence, 33 residues long: Pardaxin P-5 (33 aa).

This sequence belongs to the pardaxin family. In terms of assembly, monomer. In aqueous solution exists as a tetramer.

It is found in the secreted. The protein resides in the target cell membrane. Its function is as follows. Exhibits unusual shark repellent and surfactant properties. Forms voltage-dependent, ion-permeable channels in membranes. At high concentration causes cell membrane lysis. The polypeptide is Pardaxin P-5 (Pardachirus marmoratus (Finless sole)).